Here is a 223-residue protein sequence, read N- to C-terminus: Uracil-DNA glycosylase (223 aa).

Catalysis depends on Asp61, which acts as the Proton acceptor.

This sequence belongs to the uracil-DNA glycosylase (UDG) superfamily. UNG family.

The protein resides in the cytoplasm. It carries out the reaction Hydrolyzes single-stranded DNA or mismatched double-stranded DNA and polynucleotides, releasing free uracil.. Its function is as follows. Excises uracil residues from the DNA which can arise as a result of misincorporation of dUMP residues by DNA polymerase or due to deamination of cytosine. This chain is Uracil-DNA glycosylase, found in Histophilus somni (strain 129Pt) (Haemophilus somnus).